The primary structure comprises 816 residues: MALGTYVPTAIRTSLLRKAAVVIVTIMLVLVGVGVFTTQAVSTQVTEQRDTELLTSTEQEAEALEEWIGRQRSATQYLSQDNAIQSAPQADKSEVLSTRISGLTETAAALHYVNLSTDTIRASTDAAVEGDTYTSYSIPWRGEGLSFYGGGDVITSSVFNYRGTPVMAFASKQPGSDNAVFVFHSVETRGEAFSRNIDGSYTQVVDIEGTVQIAADESAISSAYGAGRDAPVIATGLTTNSGIETRDGLLVGHAKVEGTDWVLLKHAPTSNAYALEGDVQRNIVVLIVTAVAGLGALVLVIGRDALTALTDMSDRAEAIAAGDIDTAIEETTRIDEVGDLRRSFRDIQEYLQTVAGQADALAEQDFDADALDKSVPGRLGESLETMHWDLETAIADLEDAQETAEQSRKEAEQSREEAEALAAALESQAQDIRETVEHAADGDLTQRLETDTDHESMAAIATALNSLLEELEGTIHRIQRFSKDVAESSDHITTSAEEVKRASGQVSESVQEMSADARQQNGIVQDVSDEMTDLSATIEEIASSSDEVAAKSNDAVSVGQSGRARSQDAIEEMNAVDEQAKRTIAEMEALDDEMTEIGEIVTLIDDIAEQTSMLALNASIEAARAGEAGEGFAVVADEIKSLSKETTEATQEIESLIADVQDSTTDAVTDMQEMGDRLSEGKSTVTDTVETIDTIVERIEEANGGVQTINTATDEQATTTEEVVTMVDEVGSISDDTTARAEDAAAAAEEQTASLTEVTNRIQDLSDQSTDLYELLSDFTVREDHAVADGGAENTTGAFVRSASTDHSRDATHHDT.

2 helical membrane passes run 21–41 (VVIV…TQAV) and 282–302 (NIVV…LVIG). In terms of domain architecture, HAMP 1 spans 303-356 (RDALTALTDMSDRAEAIAAGDIDTAIEETTRIDEVGDLRRSFRDIQEYLQTVAG). Positions 399–425 (DAQETAEQSRKEAEQSREEAEALAAAL) are disordered. Over residues 405 to 418 (EQSRKEAEQSREEA) the composition is skewed to basic and acidic residues. Positions 423–476 (AALESQAQDIRETVEHAADGDLTQRLETDTDHESMAAIATALNSLLEELEGTIH) constitute an HAMP 2 domain. The Methyl-accepting transducer domain occupies 495–731 (SAEEVKRASG…EVVTMVDEVG (237 aa)). The disordered stretch occupies residues 790–816 (GGAENTTGAFVRSASTDHSRDATHHDT). Residues 793 to 803 (ENTTGAFVRSA) show a composition bias toward polar residues. The span at 804–816 (STDHSRDATHHDT) shows a compositional bias: basic and acidic residues.

It belongs to the methyl-accepting chemotaxis (MCP) protein family. Post-translationally, methylated by CheR.

The protein localises to the cell membrane. Its function is as follows. Potentially involved in chemo- or phototactic signal transduction. The protein is Transducer protein Htr18 (htr18) of Halobacterium salinarum (strain ATCC 29341 / DSM 671 / R1).